We begin with the raw amino-acid sequence, 435 residues long: ATP-dependent Clp protease ATP-binding subunit ClpX 3 (435 aa).

Residues 1 to 53 (MSSDPPAKTQHCSFCGIEQGRDTPLIAGIEGQICEACVRLAEQVVANWGRKRS) enclose the ClpX-type ZB domain. Positions 12, 15, 34, and 37 each coordinate Zn(2+). Residue 125 to 132 (PTGTGKTL) coordinates ATP.

The protein belongs to the ClpX chaperone family. As to quaternary structure, component of the ClpX-ClpP complex. Forms a hexameric ring that, in the presence of ATP, binds to fourteen ClpP subunits assembled into a disk-like structure with a central cavity, resembling the structure of eukaryotic proteasomes.

Its function is as follows. ATP-dependent specificity component of the Clp protease. It directs the protease to specific substrates. Can perform chaperone functions in the absence of ClpP. The polypeptide is ATP-dependent Clp protease ATP-binding subunit ClpX 3 (Methylococcus capsulatus (strain ATCC 33009 / NCIMB 11132 / Bath)).